The sequence spans 191 residues: Peptidyl-tRNA hydrolase (191 aa).

Tyr-14 is a tRNA binding site. Residue His-19 is the Proton acceptor of the active site. Phe-64, Asn-66, and Asn-113 together coordinate tRNA.

The protein belongs to the PTH family. As to quaternary structure, monomer.

The protein resides in the cytoplasm. It carries out the reaction an N-acyl-L-alpha-aminoacyl-tRNA + H2O = an N-acyl-L-amino acid + a tRNA + H(+). Its function is as follows. Hydrolyzes ribosome-free peptidyl-tRNAs (with 1 or more amino acids incorporated), which drop off the ribosome during protein synthesis, or as a result of ribosome stalling. Catalyzes the release of premature peptidyl moieties from peptidyl-tRNA molecules trapped in stalled 50S ribosomal subunits, and thus maintains levels of free tRNAs and 50S ribosomes. This Fusobacterium nucleatum subsp. nucleatum (strain ATCC 25586 / DSM 15643 / BCRC 10681 / CIP 101130 / JCM 8532 / KCTC 2640 / LMG 13131 / VPI 4355) protein is Peptidyl-tRNA hydrolase.